The primary structure comprises 278 residues: Poly(3-hydroxyoctanoate) depolymerase (278 aa).

The N-terminal stretch at M1–L33 is a signal peptide.

The protein resides in the secreted. It carries out the reaction Hydrolyzes the polyester poly{oxycarbonyl[(R)-2-pentylethylene]} to oligomers.. Functionally, hydrolysis of poly(3-hydroxyoctanoic acid). This is Poly(3-hydroxyoctanoate) depolymerase (phaZ) from Pseudomonas fluorescens.